The primary structure comprises 516 residues: Cilia- and flagella-associated protein 53 (516 aa).

Coiled-coil stretches lie at residues 217 to 283 (EEKK…LQVK) and 316 to 440 (MQGY…RQMK). Basic and acidic residues-rich tracts occupy residues 417 to 436 (KELL…DRNA) and 461 to 472 (QAEREEEQREFE). Disordered regions lie at residues 417–443 (KELL…KVAQ) and 455–475 (YQQS…EAGL).

This sequence belongs to the CFAP53 family.

The protein resides in the cytoplasm. Its subcellular location is the cytoskeleton. It is found in the cilium axoneme. The protein localises to the microtubule organizing center. It localises to the centrosome. The protein resides in the centriolar satellite. Microtubule inner protein (MIP) part of the dynein-decorated doublet microtubules (DMTs) in cilia axoneme, which is required for motile cilia beating. Regulates motility patterns of both 9+0 and 9+2 motile cilia through differential localization and recruitment of axonemal dynein components. Required for motile cilium formation and movement. Involved in the establishment of left-right symmetry during embryogenesis. This is Cilia- and flagella-associated protein 53 from Xenopus laevis (African clawed frog).